We begin with the raw amino-acid sequence, 268 residues long: Hydroxyethylthiazole kinase (268 aa).

M45 contributes to the substrate binding site. The ATP site is built by R121 and T167. Substrate is bound at residue G194.

It belongs to the Thz kinase family. The cofactor is Mg(2+).

The catalysed reaction is 5-(2-hydroxyethyl)-4-methylthiazole + ATP = 4-methyl-5-(2-phosphooxyethyl)-thiazole + ADP + H(+). It participates in cofactor biosynthesis; thiamine diphosphate biosynthesis; 4-methyl-5-(2-phosphoethyl)-thiazole from 5-(2-hydroxyethyl)-4-methylthiazole: step 1/1. Catalyzes the phosphorylation of the hydroxyl group of 4-methyl-5-beta-hydroxyethylthiazole (THZ). The sequence is that of Hydroxyethylthiazole kinase from Bacillus cereus (strain ATCC 10987 / NRS 248).